We begin with the raw amino-acid sequence, 385 residues long: Bifunctional chorismate mutase/prephenate dehydratase (385 aa).

The Chorismate mutase domain maps to 1–92; it reads MPANNSLLIF…ESVATQKKLL (92 aa). Positions 11, 28, 39, 48, 52, 84, and 88 each coordinate substrate. One can recognise a Prephenate dehydratase domain in the interval 105 to 285; the sequence is NFSFLGPKGS…NITRFILLNR (181 aa). The interval 286-385 is regulatory; the sequence is NPKKISKNIP…PSEKITPIAP (100 aa). An ACT domain is found at 299 to 376; it reads TLIFTTGQEA…RFIKILGCYP (78 aa).

The protein localises to the cytoplasm. The catalysed reaction is chorismate = prephenate. It catalyses the reaction prephenate + H(+) = 3-phenylpyruvate + CO2 + H2O. The protein operates within amino-acid biosynthesis; L-phenylalanine biosynthesis; phenylpyruvate from prephenate: step 1/1. It participates in metabolic intermediate biosynthesis; prephenate biosynthesis; prephenate from chorismate: step 1/1. Functionally, catalyzes the Claisen rearrangement of chorismate to prephenate and the decarboxylation/dehydration of prephenate to phenylpyruvate. This is Bifunctional chorismate mutase/prephenate dehydratase (pheA) from Buchnera aphidicola subsp. Acyrthosiphon pisum (strain APS) (Acyrthosiphon pisum symbiotic bacterium).